A 274-amino-acid polypeptide reads, in one-letter code: Acyl-[acyl-carrier-protein]--UDP-N-acetylglucosamine O-acyltransferase (274 aa).

Belongs to the transferase hexapeptide repeat family. LpxA subfamily. As to quaternary structure, homotrimer.

It is found in the cytoplasm. It carries out the reaction a (3R)-hydroxyacyl-[ACP] + UDP-N-acetyl-alpha-D-glucosamine = a UDP-3-O-[(3R)-3-hydroxyacyl]-N-acetyl-alpha-D-glucosamine + holo-[ACP]. It functions in the pathway glycolipid biosynthesis; lipid IV(A) biosynthesis; lipid IV(A) from (3R)-3-hydroxytetradecanoyl-[acyl-carrier-protein] and UDP-N-acetyl-alpha-D-glucosamine: step 1/6. In terms of biological role, involved in the biosynthesis of lipid A, a phosphorylated glycolipid that anchors the lipopolysaccharide to the outer membrane of the cell. In Bartonella bacilliformis (strain ATCC 35685 / KC583 / Herrer 020/F12,63), this protein is Acyl-[acyl-carrier-protein]--UDP-N-acetylglucosamine O-acyltransferase.